A 494-amino-acid polypeptide reads, in one-letter code: Nuclear distribution protein PAC1 (494 aa).

The LisH domain maps to 14–46 (QKNELDKSVLRYLNWNYKQTVRHEHAQDYESVR). Residues 90–123 (NSIVRLQKKIIELEQNTETLVSQIKDLNTQVSEL) adopt a coiled-coil conformation. 7 WD repeats span residues 153 to 192 (NVES…IPLA), 196 to 244 (SHTK…CKFQ), 251 to 292 (GHEH…SLKT), 295 to 334 (PHSQ…SVGT), 347 to 395 (HFIE…LMAH), 415 to 454 (GHLS…HVWE), and 457 to 492 (HTGF…SNVF).

It belongs to the WD repeat LIS1/nudF family. Self-associates. Interacts with NDL1 and dynein.

The protein resides in the cytoplasm. Its subcellular location is the cytoskeleton. The protein localises to the spindle pole. Functionally, positively regulates the activity of the minus-end directed microtubule motor protein dynein. Plays a central role in positioning the mitotic spindle at the bud neck during cell division. Targets cytoplasmic dynein to microtubule plus ends, thereby promoting dynein-mediated microtubule sliding along the bud cortex and consequently the movement of the mitotic spindle to the bud neck. This chain is Nuclear distribution protein PAC1, found in Saccharomyces cerevisiae (strain Lalvin EC1118 / Prise de mousse) (Baker's yeast).